The following is a 196-amino-acid chain: DnaA initiator-associating protein DiaA (196 aa).

The 163-residue stretch at 34–196 folds into the SIS domain; it reads LVHSLLNGNK…DNTLFLHQDD (163 aa).

It belongs to the SIS family. DiaA subfamily. Homotetramer; dimer of dimers.

Required for the timely initiation of chromosomal replication via direct interactions with the DnaA initiator protein. This is DnaA initiator-associating protein DiaA from Salmonella paratyphi A (strain ATCC 9150 / SARB42).